The chain runs to 355 residues: Agamous-like MADS-box protein AGL81 (355 aa).

Positions 1 to 22 (MAIRSLPSSSRCSSSSSSSSYS) are disordered. Residues 26–68 (TSLSNRLETIFKKASELCTLCDIEACVIYYGPDGELKTWPPER) enclose the MADS-box domain. Over residues 162 to 174 (VESQKHKETKPDH) the composition is skewed to basic and acidic residues. A disordered region spans residues 162–186 (VESQKHKETKPDHQSLASSSLNHQT). A compositionally biased stretch (polar residues) spans 176–186 (SLASSSLNHQT).

As to quaternary structure, interacts with MEE14/CBP1.

The protein localises to the nucleus. Probable transcription factor that may function in the maintenance of the proper function of the central cell in pollen tube attraction. The chain is Agamous-like MADS-box protein AGL81 from Arabidopsis thaliana (Mouse-ear cress).